The chain runs to 935 residues: Protocadherin gamma-A11 (935 aa).

Residues 1 to 29 (MANRLQRGDRSRLLLLLCIFLGTLRGFRA) form the signal peptide. 6 Cadherin domains span residues 30 to 134 (RQIR…APSF), 135 to 243 (QEDE…IPMF), 244 to 348 (TQSV…APEI), 349 to 453 (TITS…PPVF), 454 to 563 (PHSS…APEI), and 571 to 677 (DGST…ADLG). The Extracellular portion of the chain corresponds to 30–693 (RQIRYSVPEE…NSEASDLSLY (664 aa)). Residue N48 is glycosylated (N-linked (GlcNAc...) asparagine). 4 N-linked (GlcNAc...) asparagine glycosylation sites follow: N255, N266, N420, and N546. Residues 694–714 (LVVAVAAVSCIFLVFVIVLLA) form a helical membrane-spanning segment. Topologically, residues 715 to 935 (LRLWRWHKSR…KKKSGKKEKK (221 aa)) are cytoplasmic. Disordered regions lie at residues 805–844 (CDPTSNQQAPPNTDWRFSQAQRPGTSGSQNGDDTGTWPNN) and 905–935 (ATLTNAAGKRDGKAPAGGNGNKKKSGKKEKK). Residues 807 to 844 (PTSNQQAPPNTDWRFSQAQRPGTSGSQNGDDTGTWPNN) show a composition bias toward polar residues. Over residues 925–935 (NKKKSGKKEKK) the composition is skewed to basic residues.

It localises to the cell membrane. In terms of biological role, potential calcium-dependent cell-adhesion protein. May be involved in the establishment and maintenance of specific neuronal connections in the brain. This is Protocadherin gamma-A11 (PCDHGA11) from Pan troglodytes (Chimpanzee).